The following is a 375-amino-acid chain: Putative actin-26 (375 aa).

The protein belongs to the actin family.

It is found in the cytoplasm. It localises to the cytoskeleton. It catalyses the reaction ATP + H2O = ADP + phosphate + H(+). In terms of biological role, actins are highly conserved proteins that are involved in various types of cell motility and are ubiquitously expressed in all eukaryotic cells. Multiple isoforms are involved in various cellular functions such as cytoskeleton structure, cell mobility, chromosome movement and muscle contraction. The sequence is that of Putative actin-26 (act26) from Dictyostelium discoideum (Social amoeba).